The primary structure comprises 302 residues: N-acetylmuramic acid 6-phosphate etherase (302 aa).

Residues 58–221 (IGEAFLNGGR…STGAMVKTGK (164 aa)) form the SIS domain. Glu-86 functions as the Proton donor in the catalytic mechanism. The active site involves Glu-117.

It belongs to the GCKR-like family. MurNAc-6-P etherase subfamily. As to quaternary structure, homodimer.

The enzyme catalyses N-acetyl-D-muramate 6-phosphate + H2O = N-acetyl-D-glucosamine 6-phosphate + (R)-lactate. It functions in the pathway amino-sugar metabolism; N-acetylmuramate degradation. Specifically catalyzes the cleavage of the D-lactyl ether substituent of MurNAc 6-phosphate, producing GlcNAc 6-phosphate and D-lactate. This Clostridium botulinum (strain Hall / ATCC 3502 / NCTC 13319 / Type A) protein is N-acetylmuramic acid 6-phosphate etherase.